The sequence spans 288 residues: DegV domain-containing protein SAS0714 (288 aa).

The 280-residue stretch at 3 to 282 folds into the DegV domain; it reads IAVMTDSTSY…SGGLGLGYVG (280 aa). The hexadecanoate site is built by T62 and S95.

In terms of biological role, may bind long-chain fatty acids, such as palmitate, and may play a role in lipid transport or fatty acid metabolism. The protein is DegV domain-containing protein SAS0714 of Staphylococcus aureus (strain MSSA476).